Reading from the N-terminus, the 826-residue chain is (2S)-3-sulfopropanediol dehydratase (826 aa).

Residues 33–695 enclose the PFL domain; it reads PRVNRLRQAF…NTNASIDGRK (663 aa). C464 acts as the Cysteine radical intermediate in catalysis. E466 (proton acceptor) is an active-site residue. In terms of domain architecture, Glycine radical spans 706-826; sequence PVHTDGGSHD…DLIQRTELHF (121 aa). Position 802 is a glycine radical (G802).

The protein belongs to the glycyl radical enzyme (GRE) family. Post-translationally, requires the activating protein HpfH to generate the key active site glycyl radical on Gly-802 that is involved in catalysis.

It catalyses the reaction (2S)-3-sulfopropanediol = 3-oxopropane-1-sulfonate + H2O. Its pathway is organosulfur degradation; alkanesulfonate degradation. Involved in the degradation of the organosulfur compound 2(S)-dihydroxypropanesulfonate (DHPS). Catalyzes the radical-mediated dehydration of DHPS to produce 3-sulfopropionaldehyde (3-oxopropane-1-sulfonate). This Klebsiella oxytoca protein is (2S)-3-sulfopropanediol dehydratase.